We begin with the raw amino-acid sequence, 548 residues long: MALHVPKAPGFAQMLKDGAKHFSGLEEAVYRNIQACKELAQTTRTAYGPNGMNKMVINRLEKLFVTNDAATILRELEVQHPAAKMIVMASHMQEQEVGDGTNFVLVFAGALLELAEELLRIGLSVSEVISGYEIACKKAHEILPELVCCSAKNLRDVDEVSSLLRTSIMSKQYGSETFLAKLIAQACVSIFPDSGNFNVDNIRVCKILGSGIYSSSVLHGMVFKKETEGDVTSVKDAKIAVYSCPFDGMITETKGTVLIKTAEELMNFSKGEENLMDAQVKAIAGTGANVIVTGGKVADIALHYANKYNIMLVRLNSKWDLRRLCKTVGATALPKLTPPVQEEMGHCDSVYLSEVGDTQVVVFKHEKEDGAISTIVLRGSTDNLMDDIERAVDDGVNTFKVLTRDKRLVPGGGATEIELAKQITSYGETCPGLEQYAIKKFAEAFEAIPRALAENSGVKANEVISKLYSVHQEGNKNVGLDIEAEVPAVKDMLEASILDTYLGKYWAIKLATNAAVTVLRVDQIIMAKPAGGPKPPSGKKDWDDDQND.

Ala-2 carries the N-acetylalanine modification. Phosphoserine is present on Ser-23. Tyr-30 bears the Phosphotyrosine mark. ADP-binding residues include Tyr-47 and Gly-48. Asp-99 serves as a coordination point for Mg(2+). ADP contacts are provided by Gly-100, Thr-101, Asn-102, and Phe-103. The ATP site is built by Gly-100, Thr-101, and Asn-102. Ser-162 carries the post-translational modification Phosphoserine. ADP is bound by residues Met-169, Ser-170, and Lys-171. Residues Ser-170 and Lys-171 each coordinate ATP. Residues Lys-224, Lys-254, and Lys-260 each participate in a glycyl lysine isopeptide (Lys-Gly) (interchain with G-Cter in SUMO2) cross-link. Phosphoserine is present on residues Ser-269 and Ser-317. N6-acetyllysine occurs at positions 318 and 400. An ADP-binding site is contributed by Gly-412. Gly-412 serves as a coordination point for ATP. A Glycyl lysine isopeptide (Lys-Gly) (interchain with G-Cter in SUMO1) cross-link involves residue Lys-459. Lys-466 is modified (N6-acetyllysine). Asp-499 is an ADP binding site. Residues Asp-499 and Lys-504 each contribute to the ATP site. The residue at position 505 (Tyr-505) is a Phosphotyrosine. The segment at 529-548 is disordered; the sequence is PAGGPKPPSGKKDWDDDQND. A Glycyl lysine isopeptide (Lys-Gly) (interchain with G-Cter in SUMO2) cross-link involves residue Lys-534. Ser-537 carries the post-translational modification Phosphoserine. Lys-539 participates in a covalent cross-link: Glycyl lysine isopeptide (Lys-Gly) (interchain with G-Cter in SUMO2).

The protein belongs to the TCP-1 chaperonin family. As to quaternary structure, component of the chaperonin-containing T-complex (TRiC), a hexadecamer composed of two identical back-to-back stacked rings enclosing a protein folding chamber. Each ring is made up of eight different subunits: TCP1/CCT1, CCT2, CCT3, CCT4, CCT5, CCT6A/CCT6, CCT7, CCT8. Interacts with PACRG. Interacts with DNAAF4. Interacts with synaptic plasticity regulator PANTS.

The protein localises to the cytoplasm. Its subcellular location is the cytoskeleton. It localises to the microtubule organizing center. It is found in the centrosome. The protein resides in the cilium basal body. The catalysed reaction is ATP + H2O = ADP + phosphate + H(+). Its function is as follows. Component of the chaperonin-containing T-complex (TRiC), a molecular chaperone complex that assists the folding of actin, tubulin and other proteins upon ATP hydrolysis. The TRiC complex mediates the folding of WRAP53/TCAB1, thereby regulating telomere maintenance. As part of the TRiC complex may play a role in the assembly of BBSome, a complex involved in ciliogenesis regulating transports vesicles to the cilia. The sequence is that of T-complex protein 1 subunit theta (Cct8) from Mus musculus (Mouse).